The following is a 119-amino-acid chain: Ribonuclease P protein component (119 aa).

This sequence belongs to the RnpA family. As to quaternary structure, consists of a catalytic RNA component (M1 or rnpB) and a protein subunit.

It carries out the reaction Endonucleolytic cleavage of RNA, removing 5'-extranucleotides from tRNA precursor.. RNaseP catalyzes the removal of the 5'-leader sequence from pre-tRNA to produce the mature 5'-terminus. It can also cleave other RNA substrates such as 4.5S RNA. The protein component plays an auxiliary but essential role in vivo by binding to the 5'-leader sequence and broadening the substrate specificity of the ribozyme. This chain is Ribonuclease P protein component, found in Photorhabdus laumondii subsp. laumondii (strain DSM 15139 / CIP 105565 / TT01) (Photorhabdus luminescens subsp. laumondii).